Consider the following 1314-residue polypeptide: AT-rich interactive domain-containing protein 4B (1314 aa).

Disordered regions lie at residues 123–169 and 266–306; these read LPLT…RKQT and KTEL…EPFP. A phosphoserine mark is found at Ser276, Ser295, and Ser296. A compositionally biased stretch (acidic residues) spans 277 to 305; the sequence is EAEEEEEEEDDEKEKEDNSSEEEEEIEPF. The ARID domain maps to 306–398; it reads PEERENFLQQ…YLYGFEEYCR (93 aa). Glycyl lysine isopeptide (Lys-Gly) (interchain with G-Cter in SUMO2) cross-links involve residues Lys428 and Lys461. A compositionally biased stretch (basic and acidic residues) spans 439-464; it reads NVEDSKNVMPKEETPAEDESERKENI. Disordered regions lie at residues 439 to 577, 635 to 678, 709 to 888, 943 to 1215, and 1256 to 1290; these read NVED…KVQV, IKHR…SPEM, ASES…EEKR, KELF…RLPK, and VASIDRRRKRLKKKERESAATSSSSSSPSSSSITA. Ser482 carries the post-translational modification Phosphoserine. Positions 486-511 are enriched in basic and acidic residues; it reads KEAHITKLEENENLEDKDGGRARTEE. The span at 531–567 shows a compositional bias: acidic residues; it reads NKEEDEDDEEIEEEEEEDEEEDEDEDDDDNNEEEEFE. Residues 572 to 624 enclose the Tudor-knot domain; the sequence is GMKVQVRYGRGKNQKMYEASIKDSDVEGGEALYLVHYCGWNVRYDEWIKADKI. Basic and acidic residues predominate over residues 643–656; that stretch reads NKLDKEKDRDEKYS. Phosphoserine is present on residues Ser666, Ser668, Ser675, and Ser717. Basic and acidic residues-rich tracts occupy residues 722 to 754 and 778 to 787; these read ERCTQDVDNIGKDESKVEHSTHSRNELISKEEQ and SPERLRKDME. Lys751 participates in a covalent cross-link: Glycyl lysine isopeptide (Lys-Gly) (interchain with G-Cter in SUMO2). Phosphoserine occurs at positions 778 and 790. A compositionally biased stretch (acidic residues) spans 788–800; the sequence is AISEDTDFEEEDE. Thr793 carries the post-translational modification Phosphothreonine. 3 stretches are compositionally biased toward basic and acidic residues: residues 808–817, 841–853, and 997–1012; these read VKKDTTDKAL, GKKEDRTKSKEPL, and KPIEEKPLEVSDRKTE. Over residues 1013-1023 the composition is skewed to polar residues; it reads FPSSGSNSVLN. Phosphoserine is present on Ser1016. Thr1028 is subject to Phosphothreonine. Over residues 1030–1051 the composition is skewed to low complexity; it reads ESPSSVTITEASQQQSSVTVSV. Position 1031 is a phosphoserine (Ser1031). The span at 1058–1067 shows a compositional bias: basic and acidic residues; that stretch reads EEVRSIKSET. The span at 1089–1103 shows a compositional bias: low complexity; sequence SSPAGFDASVSSSSS. The span at 1132–1150 shows a compositional bias: basic residues; that stretch reads KKQKRSHKATVVNNKKKGK. Position 1152 is a phosphothreonine (Thr1152). Residues Ser1154, Ser1155, Ser1157, and Ser1161 each carry the phosphoserine modification. Residues 1164-1186 are compositionally biased toward polar residues; it reads ESVTKTQTIKSVPTGMKTHNSKS. A compositionally biased stretch (basic and acidic residues) spans 1198–1210; the sequence is RNGDKDPDLKEPS. Positions 1227-1272 form a coiled coil; that stretch reads ENMTSAERISILQEKLQEIRKHYLSLKSEVASIDRRRKRLKKKERE. Over residues 1274–1290 the composition is skewed to low complexity; the sequence is AATSSSSSSPSSSSITA.

In terms of assembly, component of a Sin3A corepressor complex consisting of SIN3A, SAP130, SUDS3/SAP45, SAP180, HDAC1 and HDAC2. Interacts with ARID4A. Interacts with AR. In terms of tissue distribution, expressed in Sertoli cells of the testis.

It localises to the nucleus. In terms of biological role, acts as a transcriptional repressor. May function in the assembly and/or enzymatic activity of the Sin3A corepressor complex or in mediating interactions between the complex and other regulatory complexes. Plays a role in the regulation of epigenetic modifications at the PWS/AS imprinting center near the SNRPN promoter, where it might function as part of a complex with RB1 and ARID4A. Involved in spermatogenesis, together with ARID4A, where it functions as a transcriptional coactivator for AR (androgen receptor) and enhances expression of genes required for sperm maturation. Regulates expression of the tight junction protein CLDN3 in the testis, which is important for integrity of the blood-testis barrier. Plays a role in myeloid homeostasis where it regulates the histone methylation state of bone marrow cells and expression of various genes involved in hematopoiesis. May function as a leukemia suppressor. The chain is AT-rich interactive domain-containing protein 4B (Arid4b) from Mus musculus (Mouse).